The chain runs to 352 residues: Ion-translocating oxidoreductase complex subunit D (352 aa).

A run of 5 helical transmembrane segments spans residues 20-40 (IMLL…WFFG), 42-62 (GTLV…ALVL), 78-109 (ALLT…VIIA), 123-143 (PAMI…TSWL), and 148-168 (IAVN…GHTA). Residue Thr187 is modified to FMN phosphoryl threonine. Transmembrane regions (helical) follow at residues 214–234 (ILAG…GVWL), 242–262 (WHIP…GWLF), 267–287 (LAAP…FFIL), 301–321 (LIFG…GGYP), and 322–342 (DGVA…DYYT).

This sequence belongs to the NqrB/RnfD family. The complex is composed of six subunits: RsxA, RsxB, RsxC, RsxD, RsxE and RsxG. FMN serves as cofactor.

Its subcellular location is the cell inner membrane. Functionally, part of a membrane-bound complex that couples electron transfer with translocation of ions across the membrane. Required to maintain the reduced state of SoxR. The polypeptide is Ion-translocating oxidoreductase complex subunit D (Escherichia coli O6:H1 (strain CFT073 / ATCC 700928 / UPEC)).